Here is a 436-residue protein sequence, read N- to C-terminus: Type II methyltransferase M.BsuRI (436 aa).

Positions 59–409 constitute an SAM-dependent MTase C5-type domain; the sequence is INVLSLFSGC…SPIANWAINY (351 aa). Residue C157 is part of the active site.

It belongs to the class I-like SAM-binding methyltransferase superfamily. C5-methyltransferase family. In terms of assembly, monomer.

It catalyses the reaction a 2'-deoxycytidine in DNA + S-adenosyl-L-methionine = a 5-methyl-2'-deoxycytidine in DNA + S-adenosyl-L-homocysteine + H(+). In terms of biological role, a methylase, recognizes the double-stranded sequence 5'-GGCC-3', methylates C-3 on both strands, and protects the DNA from cleavage by the BsuRI endonuclease. The polypeptide is Type II methyltransferase M.BsuRI (hsdRM) (Bacillus subtilis).